Consider the following 539-residue polypeptide: uncharacterized protein (539 aa).

This sequence belongs to the transposase 25 family.

This is an uncharacterized protein from Sinorhizobium fredii (strain NBRC 101917 / NGR234).